A 151-amino-acid chain; its full sequence is uncharacterized protein (151 aa).

The first 32 residues, 1 to 32, serve as a signal peptide directing secretion; that stretch reads MEEAEKAKRRSIELLNETRNCAYSSFVALAEA. The helical transmembrane segment at 45 to 67 threads the bilayer; sequence AIGFAGGISGSGHICGALWGSIA.

Its subcellular location is the membrane. This is an uncharacterized protein from Archaeoglobus fulgidus (strain ATCC 49558 / DSM 4304 / JCM 9628 / NBRC 100126 / VC-16).